The sequence spans 338 residues: Ketol-acid reductoisomerase (NADP(+)) (338 aa).

The 181-residue stretch at methionine 1 to threonine 181 folds into the KARI N-terminal Rossmann domain. Residues tyrosine 24–glutamine 27, arginine 47, and serine 52 contribute to the NADP(+) site. Histidine 107 is a catalytic residue. Glycine 133 is a binding site for NADP(+). Positions asparagine 182–isoleucine 327 constitute a KARI C-terminal knotted domain. Mg(2+)-binding residues include aspartate 190, glutamate 194, glutamate 226, and glutamate 230. Serine 251 is a binding site for substrate.

It belongs to the ketol-acid reductoisomerase family. Mg(2+) is required as a cofactor.

It carries out the reaction (2R)-2,3-dihydroxy-3-methylbutanoate + NADP(+) = (2S)-2-acetolactate + NADPH + H(+). It catalyses the reaction (2R,3R)-2,3-dihydroxy-3-methylpentanoate + NADP(+) = (S)-2-ethyl-2-hydroxy-3-oxobutanoate + NADPH + H(+). Its pathway is amino-acid biosynthesis; L-isoleucine biosynthesis; L-isoleucine from 2-oxobutanoate: step 2/4. It functions in the pathway amino-acid biosynthesis; L-valine biosynthesis; L-valine from pyruvate: step 2/4. Involved in the biosynthesis of branched-chain amino acids (BCAA). Catalyzes an alkyl-migration followed by a ketol-acid reduction of (S)-2-acetolactate (S2AL) to yield (R)-2,3-dihydroxy-isovalerate. In the isomerase reaction, S2AL is rearranged via a Mg-dependent methyl migration to produce 3-hydroxy-3-methyl-2-ketobutyrate (HMKB). In the reductase reaction, this 2-ketoacid undergoes a metal-dependent reduction by NADPH to yield (R)-2,3-dihydroxy-isovalerate. The polypeptide is Ketol-acid reductoisomerase (NADP(+)) (Bordetella bronchiseptica (strain ATCC BAA-588 / NCTC 13252 / RB50) (Alcaligenes bronchisepticus)).